We begin with the raw amino-acid sequence, 434 residues long: Adenylosuccinate synthetase (434 aa).

Residues 13 to 19 and 41 to 43 contribute to the GTP site; these read GDEGKGK and GHT. The active-site Proton acceptor is D14. 2 residues coordinate Mg(2+): D14 and G41. IMP contacts are provided by residues 14-17, 39-42, T133, R147, Q228, T243, and R307; these read DEGK and NAGH. The active-site Proton donor is H42. Residue 303–309 coordinates substrate; sequence STTGRKR. GTP contacts are provided by residues R309, 335–337, and 417–419; these read KID and STG.

It belongs to the adenylosuccinate synthetase family. As to quaternary structure, homodimer. Requires Mg(2+) as cofactor.

It is found in the cytoplasm. It catalyses the reaction IMP + L-aspartate + GTP = N(6)-(1,2-dicarboxyethyl)-AMP + GDP + phosphate + 2 H(+). It participates in purine metabolism; AMP biosynthesis via de novo pathway; AMP from IMP: step 1/2. In terms of biological role, plays an important role in the de novo pathway of purine nucleotide biosynthesis. Catalyzes the first committed step in the biosynthesis of AMP from IMP. This Wigglesworthia glossinidia brevipalpis protein is Adenylosuccinate synthetase.